The following is a 297-amino-acid chain: GTPase Era (297 aa).

The 169-residue stretch at 5-173 (RAGFVSFVGR…TTELMRLLPV (169 aa)) folds into the Era-type G domain. The tract at residues 13–20 (GRPNVGKS) is G1. A GTP-binding site is contributed by 13 to 20 (GRPNVGKS). A G2 region spans residues 39 to 43 (QTTRR). Residues 60–63 (DTPG) form a G3 region. GTP contacts are provided by residues 60-64 (DTPGV) and 123-126 (TKID). A G4 region spans residues 123 to 126 (TKID). The tract at residues 152–154 (VSA) is G5. One can recognise a KH type-2 domain in the interval 205 to 283 (VEDELPHSLA…FLSIRVKVAK (79 aa)).

The protein belongs to the TRAFAC class TrmE-Era-EngA-EngB-Septin-like GTPase superfamily. Era GTPase family. In terms of assembly, monomer.

The protein resides in the cytoplasm. It localises to the cell membrane. Its function is as follows. An essential GTPase that binds both GDP and GTP, with rapid nucleotide exchange. Plays a role in 16S rRNA processing and 30S ribosomal subunit biogenesis and possibly also in cell cycle regulation and energy metabolism. The chain is GTPase Era from Leifsonia xyli subsp. xyli (strain CTCB07).